The sequence spans 274 residues: Penicillin-insensitive murein endopeptidase (274 aa).

Residues 1 to 19 form the signal peptide; the sequence is MNKTAIALLALLASSASLA. 3 disulfides stabilise this stretch: cysteine 44–cysteine 265, cysteine 187–cysteine 235, and cysteine 216–cysteine 223. Zn(2+)-binding residues include histidine 110, histidine 113, aspartate 120, aspartate 147, histidine 150, and histidine 211. The disordered stretch occupies residues 227-274; that stretch reads PLPPPGDGCGAELQSWFEPPKPGTTKPEKKTPPPLPPSCQALLDEHVI.

This sequence belongs to the peptidase M74 family. In terms of assembly, dimer. It depends on Zn(2+) as a cofactor.

It is found in the periplasm. Its function is as follows. Murein endopeptidase that cleaves the D-alanyl-meso-2,6-diamino-pimelyl amide bond that connects peptidoglycan strands. Likely plays a role in the removal of murein from the sacculus. The polypeptide is Penicillin-insensitive murein endopeptidase (Escherichia coli O1:K1 / APEC).